A 515-amino-acid polypeptide reads, in one-letter code: Signal transduction histidine-protein kinase/phosphatase MprB (515 aa).

Topologically, residues 1–24 are cytoplasmic; sequence MTLPPPPSRLKPPRNTSSLSLRWR. The chain crosses the membrane as a helical span at residues 25–45; sequence VMLLAMSMVAMVVVLMSVAVY. The Extracellular portion of the chain corresponds to 46 to 165; that stretch reads AVVSRALYDD…TGQVLGRLGT (120 aa). The helical transmembrane segment at 166-186 threads the bilayer; sequence VLLIVGGVGVAVAAIAGGMVA. One can recognise an HAMP domain in the interval 187-239; sequence RAGLRPVGRLTQAAERVARTDDLRPIPVFGSDELARLTEAFNMMLRALTESRE. At 187-515 the chain is on the cytoplasmic side; the sequence is RAGLRPVGRL…GKSRSASKEL (329 aa). The Histidine kinase domain maps to 247–467; that stretch reads DAGHELRTPL…SFYVMLPGRP (221 aa). H250 is modified (phosphohistidine; by autocatalysis). Positions 468-515 are disordered; that stretch reads LTPGGNGTAPVPAAQFDPDMRSAGSRADRRVIKNTETNGKSRSASKEL.

Mg(2+) serves as cofactor. The cofactor is Mn(2+). Post-translationally, autophosphorylated.

It is found in the cell membrane. It catalyses the reaction ATP + protein L-histidine = ADP + protein N-phospho-L-histidine.. In terms of biological role, member of the two-component regulatory system MprB/MprA which contributes to maintaining a balance among several systems involved in stress resistance and is required for establishment and maintenance of persistent infection in the host. In response to environmental signals MprB acts both as a membrane-associated protein kinase that undergoes autophosphorylation and subsequently transfers the phosphate to MprA, and a protein phosphatase that dephosphorylates phospho-MprA. The chain is Signal transduction histidine-protein kinase/phosphatase MprB (mprB) from Mycobacterium sp. (strain KMS).